Reading from the N-terminus, the 577-residue chain is ATP-dependent zinc metalloprotease FtsH (577 aa).

The Cytoplasmic segment spans residues 1-3 (MKK). A helical transmembrane segment spans residues 4-24 (LYWIILIAVVLACSGILMSLH). The Extracellular segment spans residues 25-98 (LSVTKEEMTY…IKVDNSDSYS (74 aa)). Residues 99–119 (ATKVIQIILIITVGTGVFLFI) form a helical membrane-spanning segment. Over 120–577 (RTSGGKDKPL…IDRICLKEAV (458 aa)) the chain is Cytoplasmic. 186–193 (GPPGTGKT) contacts ATP. Zn(2+) is bound at residue histidine 409. Glutamate 410 is a catalytic residue. Zn(2+) is bound by residues histidine 413 and aspartate 487.

It in the central section; belongs to the AAA ATPase family. The protein in the C-terminal section; belongs to the peptidase M41 family. As to quaternary structure, homohexamer. Requires Zn(2+) as cofactor.

It localises to the cell membrane. Acts as a processive, ATP-dependent zinc metallopeptidase for both cytoplasmic and membrane proteins. Plays a role in the quality control of integral membrane proteins. The sequence is that of ATP-dependent zinc metalloprotease FtsH from Lachnoclostridium phytofermentans (strain ATCC 700394 / DSM 18823 / ISDg) (Clostridium phytofermentans).